A 244-amino-acid chain; its full sequence is NAD(P)H-quinone oxidoreductase subunit K (244 aa).

[4Fe-4S] cluster-binding residues include cysteine 60, cysteine 61, cysteine 125, and cysteine 156. A compositionally biased stretch (basic and acidic residues) spans 221 to 236; sequence SKKEKITELPENREQT. The tract at residues 221 to 244 is disordered; it reads SKKEKITELPENREQTEIINSEEE.

Belongs to the complex I 20 kDa subunit family. As to quaternary structure, NDH-1 can be composed of about 15 different subunits; different subcomplexes with different compositions have been identified which probably have different functions. [4Fe-4S] cluster serves as cofactor.

It is found in the cellular thylakoid membrane. The catalysed reaction is a plastoquinone + NADH + (n+1) H(+)(in) = a plastoquinol + NAD(+) + n H(+)(out). It catalyses the reaction a plastoquinone + NADPH + (n+1) H(+)(in) = a plastoquinol + NADP(+) + n H(+)(out). Functionally, NDH-1 shuttles electrons from an unknown electron donor, via FMN and iron-sulfur (Fe-S) centers, to quinones in the respiratory and/or the photosynthetic chain. The immediate electron acceptor for the enzyme in this species is believed to be plastoquinone. Couples the redox reaction to proton translocation, and thus conserves the redox energy in a proton gradient. Cyanobacterial NDH-1 also plays a role in inorganic carbon-concentration. The protein is NAD(P)H-quinone oxidoreductase subunit K of Prochlorococcus marinus (strain MIT 9312).